A 124-amino-acid chain; its full sequence is MAKFTVCLLLCLLLAAFVGAFGSELSDSHKTTLVNEIAEKMLQRKILDGVEATLVTDVAEKMFLRKMKAEAKTSETADQVFLKQLQLKGLPVCGETCVGGTCNTPGCTCSWPVCTRNGLPSLAA.

The N-terminal stretch at 1–22 (MAKFTVCLLLCLLLAAFVGAFG) is a signal peptide. The propeptide occupies 23–88 (SELSDSHKTT…QVFLKQLQLK (66 aa)). A cross-link (cyclopeptide (Gly-Asn)) is located at residues 89–117 (GLPVCGETCVGGTCNTPGCTCSWPVCTRN). 3 disulfides stabilise this stretch: C93-C107, C97-C109, and C102-C114. The propeptide occupies 118–124 (GLPSLAA).

This sequence belongs to the cyclotide family. Moebius subfamily. Kalata-B1 is a cyclic peptide which occurs in three forms: with unmodified Trp-111, with Trp-111 oxidized to form oxindolylalanine and with Trp-111 oxidized to form N-formylkynurenine. Oxidation is enhanced by exposure to sunlight. In terms of tissue distribution, leaves and stems. Lower in roots.

Functionally, probably participates in a plant defense mechanism. Has antibiotic activity. Has a diuretic effect. Has a uterotonic effect in humans. Active against the Gram-positive S.aureus with a minimum inhibition concentration of approximately 0.2 microM. Relatively ineffective against Gram-negative bacteria such as E.coli and P.aeruginosa. Inhibitory effect on the growth and development of larvae from H.punctigera. The unmodified form has hemolytic activity, the oxidized form lacks hemolytic activity. If the protein is linearized, hemolytic activity is lost. This chain is Kalata-B1 (OAK1), found in Oldenlandia affinis.